The primary structure comprises 402 residues: D-galactonate dehydratase family member EGBG_02030 (402 aa).

A Mg(2+)-binding site is contributed by aspartate 207. Histidine 209 contributes to the D-arabinonate binding site. Mg(2+) contacts are provided by glutamate 233 and glutamate 259. Residues glutamate 259, arginine 280, histidine 309, and glutamate 336 each coordinate D-arabinonate.

The protein belongs to the mandelate racemase/muconate lactonizing enzyme family. GalD subfamily.

In terms of biological role, has no detectable activity with D-mannonate and with a panel of 70 other acid sugars (in vitro), in spite of the conservation of the residues that are expected to be important for catalytic activity and cofactor binding. May have evolved a divergent function. This Enterococcus gallinarum (strain EG2) protein is D-galactonate dehydratase family member EGBG_02030.